The primary structure comprises 225 residues: Uracil-DNA glycosylase (225 aa).

D65 functions as the Proton acceptor in the catalytic mechanism.

The protein belongs to the uracil-DNA glycosylase (UDG) superfamily. UNG family.

It localises to the cytoplasm. It catalyses the reaction Hydrolyzes single-stranded DNA or mismatched double-stranded DNA and polynucleotides, releasing free uracil.. Excises uracil residues from the DNA which can arise as a result of misincorporation of dUMP residues by DNA polymerase or due to deamination of cytosine. This is Uracil-DNA glycosylase from Bacillus thuringiensis subsp. konkukian (strain 97-27).